Reading from the N-terminus, the 37-residue chain is Large ribosomal subunit protein bL36c (37 aa).

Belongs to the bacterial ribosomal protein bL36 family.

The protein localises to the plastid. Its subcellular location is the chloroplast. This is Large ribosomal subunit protein bL36c from Welwitschia mirabilis (Tree tumbo).